Consider the following 125-residue polypeptide: Glucose-1-phosphate adenylyltransferase small subunit (125 aa).

It belongs to the bacterial/plant glucose-1-phosphate adenylyltransferase family. In terms of assembly, heterotetramer. In terms of tissue distribution, leaves.

The protein resides in the plastid. Its subcellular location is the chloroplast. It is found in the amyloplast. It catalyses the reaction alpha-D-glucose 1-phosphate + ATP + H(+) = ADP-alpha-D-glucose + diphosphate. The protein operates within glycan biosynthesis; starch biosynthesis. With respect to regulation, activated by 3'phosphoglycerate, inhibited by orthophosphate. Allosteric regulation. Its function is as follows. This protein plays a role in synthesis of starch. It catalyzes the synthesis of the activated glycosyl donor, ADP-glucose from Glc-1-P and ATP. The chain is Glucose-1-phosphate adenylyltransferase small subunit (GLG1) from Zea mays (Maize).